The chain runs to 233 residues: MEGQRWLPLEANPEVTNQFLKQLGLHPNWQFVDVYGMESELLSIIPRPVCAVLLLFPITEKYEVFRTEEEEKIKSQGQDVTSSVYFMKQTISNACGTIGTIGLIHAIANNKDKVHFESGSTLKKFLEESVSMSPEERAKYLENYDAIRVTHETSAHEGQTEAPSIDEKVDLHFIALVHVDGHLYELDGWKPFPINHGKTSDETLLEDVIKVCKKFMERDPDELRFNAIALSAA.

The UCH catalytic domain occupies 5 to 232 (RWLPLEANPE…LRFNAIALSA (228 aa)). The tract at residues 8–13 (PLEANP) is interaction with ubiquitin. The active-site Nucleophile is the C95. S133 is subject to Phosphoserine. H172 acts as the Proton donor in catalysis. The segment at 222 to 227 (ELRFNA) is interaction with ubiquitin.

It belongs to the peptidase C12 family. As to expression, expressed in various tissues at low level.

The protein localises to the cytoplasm. It catalyses the reaction Thiol-dependent hydrolysis of ester, thioester, amide, peptide and isopeptide bonds formed by the C-terminal Gly of ubiquitin (a 76-residue protein attached to proteins as an intracellular targeting signal).. Its function is as follows. Ubiquitin-protein hydrolase is involved both in the processing of ubiquitin precursors and of ubiquitinated proteins. This enzyme is a thiol protease that recognizes and hydrolyzes a peptide bond at the C-terminal glycine of ubiquitin. The polypeptide is Ubiquitin carboxyl-terminal hydrolase isozyme L4 (Uchl4) (Mus musculus (Mouse)).